Here is a 363-residue protein sequence, read N- to C-terminus: Phosphoserine aminotransferase (363 aa).

Arginine 42 lines the L-glutamate pocket. Residues 76–77 (GR), tryptophan 102, threonine 156, aspartate 175, and glutamine 198 each bind pyridoxal 5'-phosphate. An N6-(pyridoxal phosphate)lysine modification is found at lysine 199. Residue 240–241 (NT) coordinates pyridoxal 5'-phosphate.

The protein belongs to the class-V pyridoxal-phosphate-dependent aminotransferase family. SerC subfamily. In terms of assembly, homodimer. Pyridoxal 5'-phosphate serves as cofactor.

It localises to the cytoplasm. The catalysed reaction is O-phospho-L-serine + 2-oxoglutarate = 3-phosphooxypyruvate + L-glutamate. The enzyme catalyses 4-(phosphooxy)-L-threonine + 2-oxoglutarate = (R)-3-hydroxy-2-oxo-4-phosphooxybutanoate + L-glutamate. Its pathway is amino-acid biosynthesis; L-serine biosynthesis; L-serine from 3-phospho-D-glycerate: step 2/3. The protein operates within cofactor biosynthesis; pyridoxine 5'-phosphate biosynthesis; pyridoxine 5'-phosphate from D-erythrose 4-phosphate: step 3/5. Functionally, catalyzes the reversible conversion of 3-phosphohydroxypyruvate to phosphoserine and of 3-hydroxy-2-oxo-4-phosphonooxybutanoate to phosphohydroxythreonine. In Shewanella baltica (strain OS185), this protein is Phosphoserine aminotransferase.